Here is a 333-residue protein sequence, read N- to C-terminus: ADP-L-glycero-D-manno-heptose-6-epimerase (333 aa).

NADP(+) contacts are provided by residues 11–12 (FI), 32–33 (DN), Lys-39, Lys-54, 76–80 (QGACS), and Asn-93. Tyr-140 functions as the Proton acceptor in the catalytic mechanism. Lys-144 is an NADP(+) binding site. Residue Asn-170 participates in substrate binding. Positions 171 and 179 each coordinate NADP(+). Lys-179 serves as the catalytic Proton acceptor. Residues Arg-181, His-188, 202–205 (FGGW), Arg-215, and Tyr-294 each bind substrate.

This sequence belongs to the NAD(P)-dependent epimerase/dehydratase family. HldD subfamily. As to quaternary structure, homopentamer. NADP(+) serves as cofactor.

It carries out the reaction ADP-D-glycero-beta-D-manno-heptose = ADP-L-glycero-beta-D-manno-heptose. Its pathway is nucleotide-sugar biosynthesis; ADP-L-glycero-beta-D-manno-heptose biosynthesis; ADP-L-glycero-beta-D-manno-heptose from D-glycero-beta-D-manno-heptose 7-phosphate: step 4/4. The protein operates within bacterial outer membrane biogenesis; LPS core biosynthesis. In terms of biological role, catalyzes the interconversion between ADP-D-glycero-beta-D-manno-heptose and ADP-L-glycero-beta-D-manno-heptose via an epimerization at carbon 6 of the heptose. The polypeptide is ADP-L-glycero-D-manno-heptose-6-epimerase (Chromobacterium violaceum (strain ATCC 12472 / DSM 30191 / JCM 1249 / CCUG 213 / NBRC 12614 / NCIMB 9131 / NCTC 9757 / MK)).